A 342-amino-acid polypeptide reads, in one-letter code: Oxygen-dependent coproporphyrinogen-III oxidase (342 aa).

Ser-98 serves as a coordination point for substrate. 2 residues coordinate a divalent metal cation: His-102 and His-112. His-112 (proton donor) is an active-site residue. A substrate-binding site is contributed by Asn-114–Arg-116. A divalent metal cation contacts are provided by His-146 and His-176. An important for dimerization region spans residues Tyr-266–Glu-301.

This sequence belongs to the aerobic coproporphyrinogen-III oxidase family. Homodimer. It depends on a divalent metal cation as a cofactor.

It is found in the cytoplasm. It catalyses the reaction coproporphyrinogen III + O2 + 2 H(+) = protoporphyrinogen IX + 2 CO2 + 2 H2O. The protein operates within porphyrin-containing compound metabolism; protoporphyrin-IX biosynthesis; protoporphyrinogen-IX from coproporphyrinogen-III (O2 route): step 1/1. Involved in the heme and chlorophyll biosynthesis. Catalyzes the aerobic oxidative decarboxylation of propionate groups of rings A and B of coproporphyrinogen-III to yield the vinyl groups in protoporphyrinogen-IX. The sequence is that of Oxygen-dependent coproporphyrinogen-III oxidase from Prochlorococcus marinus (strain MIT 9312).